Reading from the N-terminus, the 166-residue chain is Phosphopantetheine adenylyltransferase (166 aa).

Residue Ser11 participates in substrate binding. ATP-binding positions include 11 to 12 and His19; that span reads SF. Residues Lys43, Ala76, and Arg90 each contribute to the substrate site. Residues 91 to 93, Glu101, and 126 to 132 contribute to the ATP site; these read GLR and LQPISSS.

The protein belongs to the bacterial CoaD family. In terms of assembly, homohexamer. Mg(2+) is required as a cofactor.

Its subcellular location is the cytoplasm. The enzyme catalyses (R)-4'-phosphopantetheine + ATP + H(+) = 3'-dephospho-CoA + diphosphate. The protein operates within cofactor biosynthesis; coenzyme A biosynthesis; CoA from (R)-pantothenate: step 4/5. Its function is as follows. Reversibly transfers an adenylyl group from ATP to 4'-phosphopantetheine, yielding dephospho-CoA (dPCoA) and pyrophosphate. The sequence is that of Phosphopantetheine adenylyltransferase from Streptococcus equi subsp. zooepidemicus (strain H70).